Here is a 685-residue protein sequence, read N- to C-terminus: ABC transporter G family member 26 (685 aa).

Residues 65–329 form the ABC transporter domain; the sequence is LKFEDVEYKV…FSSLRILPEI (265 aa). 124–131 contacts ATP; sequence GPSGSGKT. Residues 414–623 form the ABC transmembrane type-2 domain; that stretch reads DQFLILSRRT…GFRLLLKVQY (210 aa). 6 consecutive transmembrane segments (helical) span residues 432–452, 468–488, 518–538, 542–562, 576–596, and 648–668; these read FDKLRLVQSLGVAVVLGLLWW, LMFYICIFWTSSSLFGAVYVF, MVAHVLYPTFFMIIVYFMAEF, IPCFLFTVLTILLIAITSQGA, AGMIASLVLMLFLLTGGYYVQ, and TINLNGGLQELWVLLAMAFGY.

It belongs to the ABC transporter superfamily. ABCG family. Eye pigment precursor importer (TC 3.A.1.204) subfamily. In terms of assembly, homo- or heterodimer. As to expression, mostly expressed in flowers, especially in tapetum within anthers.

The protein resides in the cell membrane. It localises to the endoplasmic reticulum membrane. Its function is as follows. Mediates the transport of sporopollenin precursors (e.g. polyketides) across the tapetum plasma membrane into the anther locule for polymerization on developing microspore walls, thus being required for male fertility and pollen exine formation and patterning prior to tapetum programmed cell death. In Arabidopsis thaliana (Mouse-ear cress), this protein is ABC transporter G family member 26.